A 92-amino-acid polypeptide reads, in one-letter code: Large ribosomal subunit protein bL25 (92 aa).

It belongs to the bacterial ribosomal protein bL25 family. In terms of assembly, part of the 50S ribosomal subunit; part of the 5S rRNA/L5/L18/L25 subcomplex. Contacts the 5S rRNA. Binds to the 5S rRNA independently of L5 and L18.

Functionally, this is one of the proteins that binds to the 5S RNA in the ribosome where it forms part of the central protuberance. The protein is Large ribosomal subunit protein bL25 of Aliivibrio fischeri (strain ATCC 700601 / ES114) (Vibrio fischeri).